The chain runs to 132 residues: Agouti-signaling protein (132 aa).

A signal peptide spans 1 to 22; the sequence is MDVTRLLLATLLVFLCFFTVYS. N-linked (GlcNAc...) asparagine glycosylation is present at Asn39. The disordered stretch occupies residues 61–87; that stretch reads HISRKEAEKKRSSKKEASMKKVARPRT. Basic and acidic residues predominate over residues 64–79; that stretch reads RKEAEKKRSSKKEASM. Intrachain disulfides connect Cys93/Cys108, Cys100/Cys114, Cys107/Cys125, Cys111/Cys132, and Cys116/Cys123. Positions 93–132 constitute an Agouti domain; sequence CVATRDSCKPPAPACCDPCASCQCRFFRSACSCRVLSLNC.

It localises to the secreted. Functionally, involved in the regulation of melanogenesis. The binding of ASP to MC1R precludes alpha-MSH initiated signaling and thus blocks production of cAMP, leading to a down-regulation of eumelanogenesis (brown/black pigment) and thus increasing synthesis of pheomelanin (yellow/red pigment). The sequence is that of Agouti-signaling protein (ASIP) from Colobus polykomos (Western black-and-white colobus monkey).